The sequence spans 308 residues: Olfactory receptor 8D1 (308 aa).

Over 1 to 25 (MTMENYSMAAQFVLDGLTQQAELQL) the chain is Extracellular. A glycan (N-linked (GlcNAc...) asparagine) is linked at N5. The helical transmembrane segment at 26–46 (PLFLLFLGIYVVTVVGNLGMI) threads the bilayer. The Cytoplasmic portion of the chain corresponds to 47-54 (LLIAVSPL). The chain crosses the membrane as a helical span at residues 55 to 75 (LHTPMYYFLSSLSFVDFCYSS). At 76 to 99 (VITPKMLVNFLGKKNTILYSECMV) the chain is on the extracellular side. C97 and C189 are oxidised to a cystine. The chain crosses the membrane as a helical span at residues 100-120 (QLFFFVVFVVAEGYLLTAMAY). At 121 to 139 (DRYVAICSPLLYNAIMSSW) the chain is on the cytoplasmic side. A helical transmembrane segment spans residues 140 to 160 (VCSLLVLAAFFLGFLSALTHT). The Extracellular segment spans residues 161-197 (SAMMKLSFCKSHIINHYFCDVLPLLNLSCSNTHLNEL). N186 carries N-linked (GlcNAc...) asparagine glycosylation. The chain crosses the membrane as a helical span at residues 198–217 (LLFIIAGFNTLVPTLAVAVS). At 218 to 237 (YAFILYSILHIRSSEGRSKA) the chain is on the cytoplasmic side. Residues 238–258 (FGTCSSHLMAVVIFFGSITFM) form a helical membrane-spanning segment. At 259–271 (YFKPPSSNSLDQE) the chain is on the extracellular side. The helical transmembrane segment at 272–292 (KVSSVFYTTVIPMLNPLIYSL) threads the bilayer. The Cytoplasmic segment spans residues 293–308 (RNKDVKKALRKVLVGK).

This sequence belongs to the G-protein coupled receptor 1 family. As to expression, expressed in the tongue.

The protein resides in the cell membrane. Its function is as follows. Odorant receptor (Potential). May be involved in taste perception. The sequence is that of Olfactory receptor 8D1 (OR8D1) from Homo sapiens (Human).